The chain runs to 298 residues: Ribosomal protein L11 methyltransferase (298 aa).

S-adenosyl-L-methionine-binding residues include T148, G169, D191, and N233.

Belongs to the methyltransferase superfamily. PrmA family.

Its subcellular location is the cytoplasm. It carries out the reaction L-lysyl-[protein] + 3 S-adenosyl-L-methionine = N(6),N(6),N(6)-trimethyl-L-lysyl-[protein] + 3 S-adenosyl-L-homocysteine + 3 H(+). Its function is as follows. Methylates ribosomal protein L11. This is Ribosomal protein L11 methyltransferase from Marinobacter nauticus (strain ATCC 700491 / DSM 11845 / VT8) (Marinobacter aquaeolei).